The primary structure comprises 130 residues: Large ribosomal subunit protein bL20 (130 aa).

Belongs to the bacterial ribosomal protein bL20 family.

Binds directly to 23S ribosomal RNA and is necessary for the in vitro assembly process of the 50S ribosomal subunit. It is not involved in the protein synthesizing functions of that subunit. This Clavibacter michiganensis subsp. michiganensis (strain NCPPB 382) protein is Large ribosomal subunit protein bL20.